A 531-amino-acid polypeptide reads, in one-letter code: Large neutral amino acids transporter small subunit 2 (531 aa).

Residues 1–29 (MEKGARQRNNTAKNHPGSDTSPEAEASSG) form a disordered region. The Cytoplasmic segment spans residues 1–43 (MEKGARQRNNTAKNHPGSDTSPEAEASSGGGGVALKKEIGLVS). Over residues 7 to 21 (QRNNTAKNHPGSDTS) the composition is skewed to polar residues. Phosphoserine occurs at positions 18, 21, 27, and 28. Residues 44–64 (ACGIIVGNIIGSGIFVSPKGV) traverse the membrane as a helical segment. Position 52 (Ile52) interacts with L-leucine. The Extracellular segment spans residues 65–72 (LENAGSVG). A helical membrane pass occupies residues 73–94 (LALIVWIVTGIITAVGALCYAE). At 95–115 (LGVTIPKSGGDYSYVKDIFGG) the chain is on the cytoplasmic side. The helical transmembrane segment at 116–148 (LAGFLRLWIAVLVIYPTNQAVIALTFSNYVLQP) threads the bilayer. L-tryptophan is bound at residue Asn133. Residues 149–156 (LFPTCFPP) lie on the Extracellular side of the membrane. A helical transmembrane segment spans residues 157 to 177 (ESGLRLLAAICLLLLTWVNCS). Residues 178–180 (SVR) are Cytoplasmic-facing. Residues 181 to 209 (WATRVQDIFTAGKLLALALIIIMGIVQIC) traverse the membrane as a helical segment. At 210-229 (KGEFFWLEPKNAFENFQEPD) the chain is on the extracellular side. Residues 230-251 (IGLVALAFLQGSFAYGGWNFLN) form a helical membrane-spanning segment. Gly245 lines the L-leucine pocket. Residues 252 to 264 (YVTEELVDPYKNL) are Cytoplasmic-facing. A helical membrane pass occupies residues 265 to 286 (PRAIFISIPLVTFVYVFANIAY). Topologically, residues 287–311 (VTAMSPQELLASNAVAVTFGEKLLG) are extracellular. Residues 312-337 (VMAWIMPISVALSTFGGVNGSLFTSS) traverse the membrane as a helical segment. Over 338 to 363 (RLFFAGAREGHLPSVLAMIHVKRCTP) the chain is Cytoplasmic. Residues 364–381 (IPALLFTCLSTLLMLVTS) form a helical membrane-spanning segment. The Extracellular segment spans residues 382 to 385 (DMYT). The chain crosses the membrane as a helical span at residues 386 to 407 (LINYVGFINYLFYGVTVAGQIV). Asn394 is a binding site for L-tryptophan. The Cytoplasmic segment spans residues 408–422 (LRWKKPDIPRPIKVS). 2 helical membrane-spanning segments follow: residues 423 to 445 (LLFPIIYLLFWAFLLIFSLWSEP) and 446 to 465 (VVCGIGLAIMLTGVPVYFLG). Residues 466 to 531 (VYWQHKPKCF…VKDPDSEEQP (66 aa)) are Cytoplasmic-facing. Residues 499–531 (NSGAEETTDDLEEQHKPIFKPTPVKDPDSEEQP) are disordered. At Ser527 the chain carries Phosphoserine.

It belongs to the amino acid-polyamine-organocation (APC) superfamily. L-type amino acid transporter (LAT) (TC 2.A.3.8) family. As to quaternary structure, disulfide-linked heterodimer composed of the catalytic light chain subunit SLC7A8 and the heavy chain subunit SLC3A2. SLC3A2 acts as a chaperone for correct plasma membrane trafficking and stabilization of SLC7A8 and modulates the substrate affinity and specificity of SLC7A8. ICAM-1 associates with the heterodimer SLC3A2/SLC7A8; facilitates leucine uptake. In terms of tissue distribution, strongly expressed in kidney and small intestine. Moderately present in placenta, ovary and brain. Expressed in the inner ear.

It is found in the cell membrane. It localises to the basolateral cell membrane. It carries out the reaction L-histidine(in) + L-phenylalanine(out) = L-histidine(out) + L-phenylalanine(in). It catalyses the reaction L-tryptophan(in) + L-phenylalanine(out) = L-tryptophan(out) + L-phenylalanine(in). The catalysed reaction is L-isoleucine(in) + L-phenylalanine(out) = L-isoleucine(out) + L-phenylalanine(in). The enzyme catalyses L-valine(in) + L-phenylalanine(out) = L-valine(out) + L-phenylalanine(in). It carries out the reaction L-leucine(in) + L-phenylalanine(out) = L-leucine(out) + L-phenylalanine(in). It catalyses the reaction L-glutamine(in) + L-phenylalanine(out) = L-glutamine(out) + L-phenylalanine(in). The catalysed reaction is L-cysteine(in) + L-phenylalanine(out) = L-cysteine(out) + L-phenylalanine(in). The enzyme catalyses L-phenylalanine(out) + L-methionine(in) = L-phenylalanine(in) + L-methionine(out). It carries out the reaction L-leucine(out) + L-methionine(in) = L-leucine(in) + L-methionine(out). It catalyses the reaction L-cysteine(out) + L-methionine(in) = L-cysteine(in) + L-methionine(out). The catalysed reaction is S-methylmercury-L-cysteine(out) + L-methionine(in) = S-methylmercury-L-cysteine(in) + L-methionine(out). The enzyme catalyses S-methylmercury-L-cysteine(in) + L-leucine(out) = S-methylmercury-L-cysteine(out) + L-leucine(in). It carries out the reaction S-methylmercury-L-cysteine(in) + L-phenylalanine(out) = S-methylmercury-L-cysteine(out) + L-phenylalanine(in). It catalyses the reaction L-phenylalanine(out) + L-serine(in) = L-phenylalanine(in) + L-serine(out). The catalysed reaction is L-phenylalanine(out) + glycine(in) = L-phenylalanine(in) + glycine(out). The enzyme catalyses L-phenylalanine(out) + L-alanine(in) = L-phenylalanine(in) + L-alanine(out). It carries out the reaction L-tryptophan(in) = L-tryptophan(out). It catalyses the reaction 3,3',5-triiodo-L-thyronine(out) = 3,3',5-triiodo-L-thyronine(in). The catalysed reaction is 3,3'-diiodo-L-thyronine(out) = 3,3'-diiodo-L-thyronine(in). The enzyme catalyses L-dopa(out) + L-phenylalanine(in) = L-dopa(in) + L-phenylalanine(out). Associates with SLC3A2 to form a functional heterodimeric complex that translocates small and large neutral amino acids with broad specificity and a stoichiometry of 1:1. Functions as amino acid antiporter mediating the influx of extracellular essential amino acids mainly in exchange with the efflux of highly concentrated intracellular amino acids. Has relatively symmetrical selectivities but strongly asymmetrical substrate affinities at both the intracellular and extracellular sides of the transporter. This asymmetry allows SLC7A8 to regulate intracellular amino acid pools (mM concentrations) by exchange with external amino acids (uM concentration range), equilibrating the relative concentrations of different amino acids across the plasma membrane instead of mediating their net uptake. May play an essential role in the reabsorption of neutral amino acids from the epithelial cells to the bloodstream in the kidney. Involved in the uptake of methylmercury (MeHg) when administered as the L-cysteine or D,L-homocysteine complexes, and hence plays a role in metal ion homeostasis and toxicity. Involved in the cellular activity of small molecular weight nitrosothiols, via the stereoselective transport of L-nitrosocysteine (L-CNSO) across the transmembrane. Imports the thyroid hormone diiodothyronine (T2) and to a smaller extent triiodothyronine (T3) but not rT 3 or thyroxine (T4). Mediates the uptake of L-DOPA. May participate in auditory function. The protein is Large neutral amino acids transporter small subunit 2 (Slc7a8) of Mus musculus (Mouse).